The sequence spans 150 residues: uncharacterized protein (150 aa).

This is an uncharacterized protein from Bacillus subtilis (strain 168).